The chain runs to 871 residues: MGIVDEFQALKAETDADLLAMQVGDFYEFFAADARTVASVLDLQVSEKSNHGSSYPMAGVPVDDLTPYLAALVERGYRVAVAEQSETDAGDIEREIERVVTPGTLLASTDADPRYLAAVVREAGGDWGLAFVDVTTGQFRVTRGADRADAVTELYRFAPAEVLPGPALRGDDDFLGVLRERTDATLTLHDAGAFDAGRATHRVREQFGDGVIESLGVAADGPVVRAAGAAVGYIAAADEGVLASVSRIQPFGGGDHVELDATTQRNLELTETMTGGSDGSLLATIDHTASAAGGRRLAAWVTRPTRDRAELDRRQAAVGALADAALARDALGDVLGEIYDLERLASRAASGRADATDLLRVRDTLAALPDVADALTTTPELAESPARDVLARVDRAAAADVRAELADALADDPPKTLSEGGLLQAGYDEALDELLAAHDEHRAWLDGLADREKDRLGITHLQVDRNKTDGYYIQVGNSETDAVPDGEDGAYRRIKQLKNATRYTMAELDSHEREVLRIEAERAELERELFAALRERVGERAAVLQDVGRALAEVDALVSLAEHAAANQWVRPELVAGDGLDIDAGRHPVVEQTTSFVPNDARFDASRRFQVVTGPNMSGKSTYMRQVAVIVLLAQVGSFVPADAARIGLVDGIYTRVGALDELAGGRSTFMVEMEELSRILHAATSDSLVVLDEVGRGTATYDGISIAWAATEYLHNEVRATTLFATHYHELTALADHLDAVVNVHVAAEERDGAVTFLRTVRDGATDRSYGVHVAALAGVPEPVVDRARGVLDRLREENAVEAKGSAGESVQAVFDVDSGGFVDDAGDDGEADDPEAAAVLDELRTVELAETSPVELLGTVQAWQDRLED.

614–621 (GPNMSGKS) provides a ligand contact to ATP.

Belongs to the DNA mismatch repair MutS family.

This protein is involved in the repair of mismatches in DNA. It is possible that it carries out the mismatch recognition step. This protein has a weak ATPase activity. The chain is DNA mismatch repair protein MutS 1 from Halobacterium salinarum (strain ATCC 29341 / DSM 671 / R1).